The sequence spans 245 residues: 8-amino-3,8-dideoxy-manno-octulosonate cytidylyltransferase (245 aa).

It belongs to the KdsB family.

It is found in the cytoplasm. The catalysed reaction is 8-amino-3,8-dideoxy-alpha-D-manno-octulosonate + CTP = CMP-8-amino-3,8-dideoxy-alpha-D-manno-oct-2-ulosonate + diphosphate. The protein operates within bacterial outer membrane biogenesis; lipopolysaccharide biosynthesis. Functionally, activates KDO8N (a required 8-carbon sugar) for incorporation into bacterial lipopolysaccharide in the Shewanella genus. The chain is 8-amino-3,8-dideoxy-manno-octulosonate cytidylyltransferase from Shewanella loihica (strain ATCC BAA-1088 / PV-4).